A 456-amino-acid chain; its full sequence is Protein COBRA (456 aa).

Positions 1 to 36 (MESFFSRSTSIVSKLSFLALWIVFLISSSSFTSTEA) are cleaved as a signal peptide. 9 N-linked (GlcNAc...) asparagine glycosylation sites follow: N45, N170, N178, N217, N242, N258, N328, N343, and N362. N431 carries GPI-anchor amidated asparagine lipidation. A propeptide spans 432–456 (GGSRSQFSFVAAVLLPLLVFFFFSA) (removed in mature form).

It belongs to the COBRA family. As to expression, expressed in roots, stems, leaves, flowers and siliques. Up-regulated in the root zone of rapid longitudinal expansion.

It is found in the lateral cell membrane. In terms of biological role, involved in determining the orientation of cell expansion, probably by playing an important role in cellulose deposition. May act by recruiting cellulose synthesizing complexes to discrete positions on the cell surface. The chain is Protein COBRA (COB) from Arabidopsis thaliana (Mouse-ear cress).